The sequence spans 395 residues: Chorismate synthase (395 aa).

The protein belongs to the chorismate synthase family. In terms of assembly, homotetramer. Requires FMNH2 as cofactor.

It carries out the reaction 5-O-(1-carboxyvinyl)-3-phosphoshikimate = chorismate + phosphate. Its pathway is metabolic intermediate biosynthesis; chorismate biosynthesis; chorismate from D-erythrose 4-phosphate and phosphoenolpyruvate: step 7/7. The protein is Chorismate synthase of Schizosaccharomyces pombe (strain 972 / ATCC 24843) (Fission yeast).